A 218-amino-acid polypeptide reads, in one-letter code: Putative glutamine transport system permease protein GlnP (218 aa).

The region spanning 19 to 208 (TLVTLKYSVI…ILVILISFIA (190 aa)) is the ABC transmembrane type-1 domain. 4 consecutive transmembrane segments (helical) span residues 25–45 (YSVI…ICKV), 57–79 (FYTS…FAAP), 86–108 (FNVF…SEVI), and 187–207 (FFPM…ISFI).

It belongs to the binding-protein-dependent transport system permease family. HisMQ subfamily.

The protein resides in the cell inner membrane. In terms of biological role, part of the binding-protein-dependent transport system for glutamine; probably responsible for the translocation of the substrate across the membrane. This Rickettsia prowazekii (strain Madrid E) protein is Putative glutamine transport system permease protein GlnP (glnP).